The sequence spans 155 residues: 3-dehydroquinate dehydratase (155 aa).

The active-site Proton acceptor is the Tyr31. Substrate-binding residues include Asn83, His89, and Asp96. His109 (proton donor) is an active-site residue. Residues Leu110–Ser111 and Arg120 contribute to the substrate site.

Belongs to the type-II 3-dehydroquinase family. Homododecamer.

It catalyses the reaction 3-dehydroquinate = 3-dehydroshikimate + H2O. The protein operates within metabolic intermediate biosynthesis; chorismate biosynthesis; chorismate from D-erythrose 4-phosphate and phosphoenolpyruvate: step 3/7. Its function is as follows. Catalyzes a trans-dehydration via an enolate intermediate. The chain is 3-dehydroquinate dehydratase from Laribacter hongkongensis (strain HLHK9).